Reading from the N-terminus, the 70-residue chain is Exodeoxyribonuclease 7 small subunit (70 aa).

This sequence belongs to the XseB family. Heterooligomer composed of large and small subunits.

Its subcellular location is the cytoplasm. The enzyme catalyses Exonucleolytic cleavage in either 5'- to 3'- or 3'- to 5'-direction to yield nucleoside 5'-phosphates.. Functionally, bidirectionally degrades single-stranded DNA into large acid-insoluble oligonucleotides, which are then degraded further into small acid-soluble oligonucleotides. In Streptococcus pneumoniae serotype 2 (strain D39 / NCTC 7466), this protein is Exodeoxyribonuclease 7 small subunit.